A 70-amino-acid chain; its full sequence is Small, acid-soluble spore protein 1 (70 aa).

The protein belongs to the alpha/beta-type SASP family.

In terms of biological role, SASP are bound to spore DNA. They are double-stranded DNA-binding proteins that cause DNA to change to an a-like conformation. They protect the DNA backbone from chemical and enzymatic cleavage and are thus involved in dormant spore's high resistance to UV light. This is Small, acid-soluble spore protein 1 (sasP-1) from Geobacillus stearothermophilus (Bacillus stearothermophilus).